The sequence spans 453 residues: Nuclear hormone receptor family member nhr-12 (453 aa).

Residues 1–37 (MEQIPQEQKTEPFLASFTTTEKLGTETPTTSITPNTQ) are disordered. Residues 18 to 36 (TTTEKLGTETPTTSITPNT) are compositionally biased toward low complexity. Residues 44 to 119 (KPNCAVCNEV…VGMNPECVQN (76 aa)) constitute a DNA-binding region (nuclear receptor). NR C4-type zinc fingers lie at residues 47–67 (CAVC…CRAC) and 83–107 (CRAG…YDKC). The NR LBD domain maps to 178 to 451 (FSPASLPGLS…ENFVNIINGK (274 aa)).

This sequence belongs to the nuclear hormone receptor family.

It is found in the nucleus. Its function is as follows. Orphan nuclear receptor. The sequence is that of Nuclear hormone receptor family member nhr-12 (nhr-12) from Caenorhabditis elegans.